The following is a 504-amino-acid chain: 5-epiaristolochene 1,3-dihydroxylase (504 aa).

Residues 2 to 22 form a helical membrane-spanning segment; sequence QFFSLVSIFLFLSFLFLLRKW. Cysteine 442 is a heme binding site.

Belongs to the cytochrome P450 family. It depends on heme as a cofactor.

The protein resides in the membrane. The enzyme catalyses (+)-5-epi-aristolochene + 2 reduced [NADPH--hemoprotein reductase] + 2 O2 = capsidiol + 2 oxidized [NADPH--hemoprotein reductase] + 2 H2O + 2 H(+). With respect to regulation, inhibited by ancymidol and ketoconazole. Its function is as follows. Involved in the biosynthesis of capsidiol. Catalyzes the successive and independent hydroxylations at the C1 and C3 positions of 5-epiaristolochene. The second hydroxylation step is 8-fold more efficient than the first hydroxylation reaction. Capable of utilizing premnaspirodiene as a substrate. This chain is 5-epiaristolochene 1,3-dihydroxylase (CYP71D20), found in Nicotiana tabacum (Common tobacco).